Reading from the N-terminus, the 202-residue chain is Orotate phosphoribosyltransferase (202 aa).

Residue 113–121 (EDIITTGGS) coordinates 5-phospho-alpha-D-ribose 1-diphosphate. Orotate-binding residues include threonine 117 and arginine 145.

It belongs to the purine/pyrimidine phosphoribosyltransferase family. PyrE subfamily. In terms of assembly, homodimer. Mg(2+) serves as cofactor.

The catalysed reaction is orotidine 5'-phosphate + diphosphate = orotate + 5-phospho-alpha-D-ribose 1-diphosphate. It functions in the pathway pyrimidine metabolism; UMP biosynthesis via de novo pathway; UMP from orotate: step 1/2. In terms of biological role, catalyzes the transfer of a ribosyl phosphate group from 5-phosphoribose 1-diphosphate to orotate, leading to the formation of orotidine monophosphate (OMP). The protein is Orotate phosphoribosyltransferase of Campylobacter lari (strain RM2100 / D67 / ATCC BAA-1060).